A 369-amino-acid polypeptide reads, in one-letter code: tRNA/tmRNA (uracil-C(5))-methyltransferase (369 aa).

S-adenosyl-L-methionine-binding residues include glutamine 190, tyrosine 218, asparagine 223, glutamate 239, and aspartate 301. The active-site Nucleophile is cysteine 326. The active-site Proton acceptor is the glutamate 360.

Belongs to the class I-like SAM-binding methyltransferase superfamily. RNA M5U methyltransferase family. TrmA subfamily.

The enzyme catalyses uridine(54) in tRNA + S-adenosyl-L-methionine = 5-methyluridine(54) in tRNA + S-adenosyl-L-homocysteine + H(+). It catalyses the reaction uridine(341) in tmRNA + S-adenosyl-L-methionine = 5-methyluridine(341) in tmRNA + S-adenosyl-L-homocysteine + H(+). Functionally, dual-specificity methyltransferase that catalyzes the formation of 5-methyluridine at position 54 (m5U54) in all tRNAs, and that of position 341 (m5U341) in tmRNA (transfer-mRNA). This chain is tRNA/tmRNA (uracil-C(5))-methyltransferase, found in Vibrio atlanticus (strain LGP32) (Vibrio splendidus (strain Mel32)).